The sequence spans 66 residues: Photosystem II reaction center protein H (66 aa).

The helical transmembrane segment at 27-47 (GAVPIMTVIGLLLLVFLVILL) threads the bilayer.

Belongs to the PsbH family. In terms of assembly, PSII is composed of 1 copy each of membrane proteins PsbA, PsbB, PsbC, PsbD, PsbE, PsbF, PsbH, PsbI, PsbJ, PsbK, PsbL, PsbM, PsbT, PsbX, PsbY, Psb30/Ycf12, peripheral proteins PsbO, CyanoQ (PsbQ), PsbU, PsbV and a large number of cofactors. It forms dimeric complexes.

The protein resides in the cellular thylakoid membrane. In terms of biological role, one of the components of the core complex of photosystem II (PSII), required for its stability and/or assembly. PSII is a light-driven water:plastoquinone oxidoreductase that uses light energy to abstract electrons from H(2)O, generating O(2) and a proton gradient subsequently used for ATP formation. It consists of a core antenna complex that captures photons, and an electron transfer chain that converts photonic excitation into a charge separation. This chain is Photosystem II reaction center protein H, found in Prochlorococcus marinus (strain MIT 9515).